The following is a 96-amino-acid chain: Co-chaperonin GroES (96 aa).

This sequence belongs to the GroES chaperonin family. As to quaternary structure, heptamer of 7 subunits arranged in a ring. Interacts with the chaperonin GroEL.

It is found in the cytoplasm. Its function is as follows. Together with the chaperonin GroEL, plays an essential role in assisting protein folding. The GroEL-GroES system forms a nano-cage that allows encapsulation of the non-native substrate proteins and provides a physical environment optimized to promote and accelerate protein folding. GroES binds to the apical surface of the GroEL ring, thereby capping the opening of the GroEL channel. This Geobacter sp. (strain M21) protein is Co-chaperonin GroES.